Reading from the N-terminus, the 402-residue chain is Imidazolonepropionase (402 aa).

Positions 66 and 68 each coordinate Fe(3+). Zn(2+) contacts are provided by H66 and H68. R75, Y138, and H171 together coordinate 4-imidazolone-5-propanoate. Y138 is a binding site for N-formimidoyl-L-glutamate. H236 contributes to the Fe(3+) binding site. H236 serves as a coordination point for Zn(2+). Q239 serves as a coordination point for 4-imidazolone-5-propanoate. Residue D311 coordinates Fe(3+). Position 311 (D311) interacts with Zn(2+). 2 residues coordinate N-formimidoyl-L-glutamate: N313 and G315. T316 lines the 4-imidazolone-5-propanoate pocket.

This sequence belongs to the metallo-dependent hydrolases superfamily. HutI family. Zn(2+) serves as cofactor. Fe(3+) is required as a cofactor.

The protein resides in the cytoplasm. The catalysed reaction is 4-imidazolone-5-propanoate + H2O = N-formimidoyl-L-glutamate. It participates in amino-acid degradation; L-histidine degradation into L-glutamate; N-formimidoyl-L-glutamate from L-histidine: step 3/3. Catalyzes the hydrolytic cleavage of the carbon-nitrogen bond in imidazolone-5-propanoate to yield N-formimidoyl-L-glutamate. It is the third step in the universal histidine degradation pathway. In Pseudomonas paraeruginosa (strain DSM 24068 / PA7) (Pseudomonas aeruginosa (strain PA7)), this protein is Imidazolonepropionase.